Consider the following 231-residue polypeptide: Uridylate kinase (231 aa).

9 to 12 provides a ligand contact to ATP; that stretch reads KLSG. G49 is a UMP binding site. The ATP site is built by G50 and R54. UMP contacts are provided by residues D69 and 130–137; that span reads AGMPYFST. Positions 158, 164, and 167 each coordinate ATP.

Belongs to the UMP kinase family. In terms of assembly, homohexamer.

Its subcellular location is the cytoplasm. The enzyme catalyses UMP + ATP = UDP + ADP. The protein operates within pyrimidine metabolism; CTP biosynthesis via de novo pathway; UDP from UMP (UMPK route): step 1/1. Inhibited by UTP. In terms of biological role, catalyzes the reversible phosphorylation of UMP to UDP. In Tropheryma whipplei (strain Twist) (Whipple's bacillus), this protein is Uridylate kinase.